The following is a 220-amino-acid chain: Lipoprotein-releasing system ATP-binding protein LolD (220 aa).

The ABC transporter domain occupies 1-220 (MRAVDIHKSY…YRMKDGQWQS (220 aa)). ATP is bound at residue 37–44 (GASGAGKS).

Belongs to the ABC transporter superfamily. Lipoprotein translocase (TC 3.A.1.125) family. As to quaternary structure, the complex is composed of two ATP-binding proteins (LolD) and two transmembrane proteins (LolC and LolE).

It is found in the cell inner membrane. In terms of biological role, part of the ABC transporter complex LolCDE involved in the translocation of mature outer membrane-directed lipoproteins, from the inner membrane to the periplasmic chaperone, LolA. Responsible for the formation of the LolA-lipoprotein complex in an ATP-dependent manner. This Bdellovibrio bacteriovorus (strain ATCC 15356 / DSM 50701 / NCIMB 9529 / HD100) protein is Lipoprotein-releasing system ATP-binding protein LolD.